The following is a 357-amino-acid chain: 5-hydroxytryptamine receptor 5A (357 aa).

Residues 1-36 lie on the Extracellular side of the membrane; it reads MDLPVNLTSFSLSTPSPLETNHSLGKDDLRPSSPLL. Asparagine 6 and asparagine 21 each carry an N-linked (GlcNAc...) asparagine glycan. Residues 37-63 traverse the membrane as a helical segment; that stretch reads SVFGVLILTLLGFLVAATFAWNLLVLA. At 64 to 76 the chain is on the cytoplasmic side; the sequence is TILRVRTFHRVPH. Residues 77–103 traverse the membrane as a helical segment; it reads NLVASMAVSDVLVAALVMPLSLVHELS. At 104–114 the chain is on the extracellular side; that stretch reads GRRWQLGRRLC. Cysteine 114 and cysteine 192 are oxidised to a cystine. The chain crosses the membrane as a helical span at residues 115–137; sequence QLWIACDVLCCTASIWNVTAIAL. Aspartate 121 lines the serotonin pocket. The Cytoplasmic portion of the chain corresponds to 138 to 155; it reads DRYWSITRHMEYTLRTRK. A helical membrane pass occupies residues 156 to 176; sequence CVSNVMIALTWALSAVISLAP. The Extracellular portion of the chain corresponds to 177–198; the sequence is LLFGWGETYSEGSEECQVSREP. Residues 199 to 220 traverse the membrane as a helical segment; the sequence is SYAVFSTVGAFYLPLCVVLFVY. At 221–287 the chain is on the cytoplasmic side; it reads WKIYKAAKFR…QKEQRAALMV (67 aa). Residues 288 to 312 traverse the membrane as a helical segment; the sequence is GILIGVFVLCWIPFFLTELISPLCS. Over 313 to 314 the chain is Extracellular; the sequence is CD. Residues 315-339 form a helical membrane-spanning segment; sequence IPAIWKSIFLWLGYSNSFFNPLIYT. At 340–357 the chain is on the cytoplasmic side; sequence AFNKNYNSAFKNFFSRQH.

This sequence belongs to the G-protein coupled receptor 1 family.

Its subcellular location is the cell membrane. Functionally, G-protein coupled receptor for 5-hydroxytryptamine (serotonin), a biogenic hormone that functions as a neurotransmitter, a hormone and a mitogen. Also functions as a receptor for ergot alkaloid derivatives and other psychoactive substances. Ligand binding causes a conformation change that triggers signaling via guanine nucleotide-binding proteins (G proteins) and modulates the activity of downstream effectors. HTR5A is coupled to G(i)/G(o) G alpha proteins and mediates inhibitory neurotransmission: signaling inhibits adenylate cyclase activity and activates a phosphatidylinositol-calcium second messenger system that regulates the release of Ca(2+) ions from intracellular stores. This chain is 5-hydroxytryptamine receptor 5A, found in Homo sapiens (Human).